Here is a 249-residue protein sequence, read N- to C-terminus: Coproheme decarboxylase (249 aa).

Fe-coproporphyrin III is bound by residues R131, 145–149 (YPMDK), H172, and Q185. Y145 is an active-site residue.

The protein belongs to the ChdC family. Type 1 subfamily. Requires Fe-coproporphyrin III as cofactor.

The enzyme catalyses Fe-coproporphyrin III + 2 H2O2 + 2 H(+) = heme b + 2 CO2 + 4 H2O. It catalyses the reaction Fe-coproporphyrin III + H2O2 + H(+) = harderoheme III + CO2 + 2 H2O. It carries out the reaction harderoheme III + H2O2 + H(+) = heme b + CO2 + 2 H2O. The protein operates within porphyrin-containing compound metabolism; protoheme biosynthesis. Its function is as follows. Involved in coproporphyrin-dependent heme b biosynthesis. Catalyzes the decarboxylation of Fe-coproporphyrin III (coproheme) to heme b (protoheme IX), the last step of the pathway. The reaction occurs in a stepwise manner with a three-propionate intermediate. This chain is Coproheme decarboxylase, found in Staphylococcus epidermidis (strain ATCC 35984 / DSM 28319 / BCRC 17069 / CCUG 31568 / BM 3577 / RP62A).